The primary structure comprises 405 residues: L-rhamnonate dehydratase (405 aa).

Positions 33 and 59 each coordinate substrate. The Mg(2+) site is built by Asp226, Glu252, and Glu280. The active-site Proton acceptor is His329. Glu349 provides a ligand contact to substrate.

This sequence belongs to the mandelate racemase/muconate lactonizing enzyme family. RhamD subfamily. As to quaternary structure, homooctamer; tetramer of dimers. Mg(2+) is required as a cofactor.

It carries out the reaction L-rhamnonate = 2-dehydro-3-deoxy-L-rhamnonate + H2O. Functionally, catalyzes the dehydration of L-rhamnonate to 2-keto-3-deoxy-L-rhamnonate (KDR). This is L-rhamnonate dehydratase from Salmonella paratyphi A (strain AKU_12601).